A 418-amino-acid polypeptide reads, in one-letter code: Transcription termination factor Rho (418 aa).

One can recognise a Rho RNA-BD domain in the interval 48–123 (SIFGEGTLEV…VKVDKVNGEA (76 aa)). Residues 169–174 (GKGQRA), 181–186 (KSGKTV), and Arg212 each bind ATP.

The protein belongs to the Rho family. In terms of assembly, homohexamer. The homohexamer assembles into an open ring structure.

Functionally, facilitates transcription termination by a mechanism that involves Rho binding to the nascent RNA, activation of Rho's RNA-dependent ATPase activity, and release of the mRNA from the DNA template. The polypeptide is Transcription termination factor Rho (Chromobacterium violaceum (strain ATCC 12472 / DSM 30191 / JCM 1249 / CCUG 213 / NBRC 12614 / NCIMB 9131 / NCTC 9757 / MK)).